A 118-amino-acid chain; its full sequence is Ribonuclease P protein component (118 aa).

The protein belongs to the RnpA family. As to quaternary structure, consists of a catalytic RNA component (M1 or rnpB) and a protein subunit.

The enzyme catalyses Endonucleolytic cleavage of RNA, removing 5'-extranucleotides from tRNA precursor.. RNaseP catalyzes the removal of the 5'-leader sequence from pre-tRNA to produce the mature 5'-terminus. It can also cleave other RNA substrates such as 4.5S RNA. The protein component plays an auxiliary but essential role in vivo by binding to the 5'-leader sequence and broadening the substrate specificity of the ribozyme. In Shewanella denitrificans (strain OS217 / ATCC BAA-1090 / DSM 15013), this protein is Ribonuclease P protein component.